Here is a 688-residue protein sequence, read N- to C-terminus: Glycine--tRNA ligase beta subunit (688 aa).

Belongs to the class-II aminoacyl-tRNA synthetase family. In terms of assembly, tetramer of two alpha and two beta subunits.

It is found in the cytoplasm. The catalysed reaction is tRNA(Gly) + glycine + ATP = glycyl-tRNA(Gly) + AMP + diphosphate. In Listeria monocytogenes serotype 4a (strain HCC23), this protein is Glycine--tRNA ligase beta subunit.